Consider the following 192-residue polypeptide: E3 ubiquitin-protein ligase RNF185 (192 aa).

Polar residues predominate over residues 1–14 (MASKGPSASASTEN). The interval 1-30 (MASKGPSASASTENSSAGGPSGSSNGTGES) is disordered. At 1 to 130 (MASKGPSASA…GGFQGFGFGD (130 aa)) the chain is on the cytoplasmic side. Positions 15–27 (SSAGGPSGSSNGT) are enriched in low complexity. Residues 29-80 (ESGGQDSTFECNICLDTAKDAVISLCGHLFCWPCLHQWLETRPNRQVCPVCK) are required for ubiquitin ligase activity and protection against ER stress-induced cell death. The RING-type zinc finger occupies 39-80 (CNICLDTAKDAVISLCGHLFCWPCLHQWLETRPNRQVCPVCK). The segment at 90–123 (PLYGRGSTGQQDPREKTPPRPQGQRPEPENRGGF) is disordered. A helical membrane pass occupies residues 131 to 151 (GGFQMSFGIGAFPFGIFATAF). The Mitochondrial intermembrane segment spans residues 152–171 (NINDGRPPPAVPGTPQYVDE). Residues 172 to 192 (QFLSRLFLFVALVIMFWLLIA) form a helical membrane-spanning segment.

Interacts with ATG5 and BNIP1.

The protein resides in the mitochondrion outer membrane. The protein localises to the endoplasmic reticulum membrane. It carries out the reaction S-ubiquitinyl-[E2 ubiquitin-conjugating enzyme]-L-cysteine + [acceptor protein]-L-lysine = [E2 ubiquitin-conjugating enzyme]-L-cysteine + N(6)-ubiquitinyl-[acceptor protein]-L-lysine.. It functions in the pathway protein modification; protein ubiquitination. Functionally, E3 ubiquitin-protein ligase that regulates selective mitochondrial autophagy by mediating 'Lys-63'-linked polyubiquitination of BNIP1. Acts in the endoplasmic reticulum (ER)-associated degradation (ERAD) pathway, which targets misfolded proteins that accumulate in the endoplasmic reticulum (ER) for ubiquitination and subsequent proteasome-mediated degradation. Protects cells from ER stress-induced apoptosis. Responsible for the cotranslational ubiquitination and degradation of CFTR in the ERAD pathway. Also acts as a regulator of the innate antiviral response by catalyzing 'Lys-27'-linked polyubiquitination of CGAS, thereby promoting CGAS cyclic GMP-AMP synthase activity. Preferentially associates with the E2 enzymes UBE2J1 and UBE2J2. The sequence is that of E3 ubiquitin-protein ligase RNF185 (Rnf185) from Rattus norvegicus (Rat).